A 425-amino-acid polypeptide reads, in one-letter code: Kynurenine/alpha-aminoadipate aminotransferase, mitochondrial (425 aa).

A mitochondrion-targeting transit peptide spans 1 to 29; sequence MNYSRFLTATSLARKTSPIRATVEIMSRA. R20 serves as a coordination point for substrate. S40 bears the Phosphoserine mark. Substrate-binding residues include Y74 and Y142. The residue at position 172 (K172) is an N6-succinyllysine. K179 carries the N6-acetyllysine modification. The segment covering 179–188 has biased composition (basic and acidic residues); the sequence is KPEDSKDPTK. Residues 179–208 form a disordered region; sequence KPEDSKDPTKRTPKFLYTIPNGNNPTGNSL. The span at 198–208 shows a compositional bias: polar residues; the sequence is PNGNNPTGNSL. N202 provides a ligand contact to substrate. N6-(pyridoxal phosphate)lysine; alternate is present on K263. Residues K263 and K339 each carry the N6-acetyllysine; alternate modification. K263 and K339 each carry N6-succinyllysine; alternate. At K351 the chain carries N6-acetyllysine. K367 is modified (N6-acetyllysine; alternate). At K367 the chain carries N6-succinyllysine; alternate. R399 lines the substrate pocket. The residue at position 422 (K422) is an N6-acetyllysine.

This sequence belongs to the class-I pyridoxal-phosphate-dependent aminotransferase family. As to quaternary structure, homodimer. It depends on pyridoxal 5'-phosphate as a cofactor. The N-terminus is blocked.

It is found in the mitochondrion. The catalysed reaction is L-kynurenine + 2-oxoglutarate = kynurenate + L-glutamate + H2O. It catalyses the reaction L-2-aminoadipate + 2-oxoglutarate = 2-oxoadipate + L-glutamate. It carries out the reaction glycine + 2-oxoglutarate = glyoxylate + L-glutamate. The enzyme catalyses L-kynurenine + glyoxylate = kynurenate + glycine + H2O. The catalysed reaction is 3-hydroxy-L-kynurenine + glyoxylate = xanthurenate + glycine + H2O. It catalyses the reaction 2-oxohexanoate + L-kynurenine = L-2-aminohexanoate + kynurenate + H2O. It carries out the reaction 3-phenylpyruvate + L-kynurenine = kynurenate + L-phenylalanine + H2O. The enzyme catalyses 4-methylsulfanyl-2-oxobutanoate + L-kynurenine = kynurenate + L-methionine + H2O. The catalysed reaction is 2-oxo-3-sulfanylpropanoate + L-kynurenine = kynurenate + L-cysteine + H2O. It catalyses the reaction indole-3-pyruvate + L-kynurenine = kynurenate + L-tryptophan + H2O. It carries out the reaction 2-oxopentanoate + L-kynurenine = L-2-aminopentanoate + kynurenate + H2O. The enzyme catalyses 4-methyl-2-oxopentanoate + L-kynurenine = kynurenate + L-leucine + H2O. The catalysed reaction is glyoxylate + L-methionine = 4-methylsulfanyl-2-oxobutanoate + glycine. It catalyses the reaction L-2-aminoadipate + glyoxylate = 2-oxoadipate + glycine. It carries out the reaction L-tyrosine + glyoxylate = 3-(4-hydroxyphenyl)pyruvate + glycine. The enzyme catalyses glyoxylate + L-phenylalanine = 3-phenylpyruvate + glycine. The catalysed reaction is L-tryptophan + glyoxylate = indole-3-pyruvate + glycine. It catalyses the reaction L-leucine + glyoxylate = 4-methyl-2-oxopentanoate + glycine. It carries out the reaction 2-oxobutanoate + L-kynurenine = (2S)-2-aminobutanoate + kynurenate + H2O. The enzyme catalyses 2-oxoadipate + L-kynurenine = L-2-aminoadipate + kynurenate + H2O. The catalysed reaction is 2-oxoadipate + L-kynurenine = 4-(2-aminophenyl)-2,4-dioxobutanoate + L-2-aminoadipate. Its pathway is amino-acid degradation; L-lysine degradation via saccharopine pathway; glutaryl-CoA from L-lysine: step 4/6. In terms of biological role, transaminase with broad substrate specificity. Has transaminase activity towards aminoadipate, kynurenine, methionine and glutamate. Shows activity also towards tryptophan, aspartate and hydroxykynurenine. Accepts a variety of oxo-acids as amino-group acceptors, with a preference for 2-oxoglutarate, 2-oxocaproic acid, phenylpyruvate and alpha-oxo-gamma-methiol butyric acid. Can also use glyoxylate as amino-group acceptor (in vitro). This Rattus norvegicus (Rat) protein is Kynurenine/alpha-aminoadipate aminotransferase, mitochondrial.